A 703-amino-acid polypeptide reads, in one-letter code: Calcium-responsive transcription factor (703 aa).

Disordered regions lie at residues 1–61 (MEQS…QNIP), 130–150 (GPLV…SDRN), and 517–539 (GNSQ…SLSP). The span at 9–22 (KVNHNDSEESKTDS) shows a compositional bias: basic and acidic residues. Polar residues predominate over residues 23-34 (QHLTYMDSSEPS).

The protein resides in the nucleus. In terms of biological role, acts as a transcriptional activator that mediates the calcium- and neuron-selective induction of BDNF exon III transcription. Binds to the consensus calcium-response element CaRE1 5'-CTATTTCGAG-3' sequence. The chain is Calcium-responsive transcription factor (CARF) from Bos taurus (Bovine).